A 23-amino-acid chain; its full sequence is Phospholipase A2 crotoxin basic chain 3 (23 aa).

Requires Ca(2+) as cofactor. Post-translationally, contains 7 disulfide bonds. Expressed by the venom gland.

It localises to the secreted. It catalyses the reaction a 1,2-diacyl-sn-glycero-3-phosphocholine + H2O = a 1-acyl-sn-glycero-3-phosphocholine + a fatty acid + H(+). Snake venom phospholipase A2 (PLA2) that shows presynaptic neurotoxicity. PLA2 catalyzes the calcium-dependent hydrolysis of the 2-acyl groups in 3-sn-phosphoglycerides. This Crotalus durissus terrificus (South American rattlesnake) protein is Phospholipase A2 crotoxin basic chain 3.